A 92-amino-acid chain; its full sequence is MARSIKKGPFVADHLIKKIENLNAKGEKKVIITWSRASTIVPMMIGHTIAVHNGREHLPVFVTDRMVGQKLGEFSPTRTFRGHVKSDKKSRR.

Belongs to the universal ribosomal protein uS19 family.

It is found in the plastid. It localises to the chloroplast. In terms of biological role, protein S19 forms a complex with S13 that binds strongly to the 16S ribosomal RNA. The protein is Small ribosomal subunit protein uS19c of Chaetosphaeridium globosum (Charophycean green alga).